Reading from the N-terminus, the 368-residue chain is Agmatine deiminase (368 aa).

Cys-357 acts as the Amidino-cysteine intermediate in catalysis.

It belongs to the agmatine deiminase family. In terms of assembly, homodimer.

The enzyme catalyses agmatine + H2O = N-carbamoylputrescine + NH4(+). Its pathway is amine and polyamine biosynthesis; putrescine biosynthesis via agmatine pathway; N-carbamoylputrescine from agmatine: step 1/1. Its function is as follows. Mediates the hydrolysis of agmatine into N-carbamoylputrescine in the arginine decarboxylase (ADC) pathway of putrescine biosynthesis, a basic polyamine. The sequence is that of Agmatine deiminase from Ectopseudomonas mendocina (strain ymp) (Pseudomonas mendocina).